Here is a 1710-residue protein sequence, read N- to C-terminus: Extracellular matrix protein A (1710 aa).

A signal peptide spans 1-22 (MKISIFILLLFISSMVIISVNA). Cys-rich CT repeat units follow at residues 43–70 (NRWS…CDDE), 71–94 (NACT…VDDK), 95–117 (NPCT…CDDK), 118–141 (NACT…CDDN), 142–165 (NPCT…VDDN), 166–189 (NPCT…VDDL), 190–213 (NPCT…VDDN), 214–237 (NKCT…CDDN), 238–261 (NACT…CDDK), 262–285 (NPCT…VDDN), 286–309 (NPCT…VDDN), 310–333 (NQCT…TDDN), 334–357 (NPCT…VDDN), 358–381 (NKCT…TDDN), 382–405 (NACT…CDDK), 406–429 (KACT…CDDN), 430–453 (NPCT…VDDN), 454–477 (NPCT…VDDN), 478–501 (NKCT…TDDN), 502–525 (NACT…CDDK), 526–549 (KACT…CDDN), 550–573 (NPCT…VDDN), 574–597 (NPCT…VDDN), 598–621 (NKCT…TDDN), 622–645 (NACT…CDDS), 646–669 (NPCT…VDDN), 670–693 (NPCT…VDDN), 694–717 (NKCT…TDDN), 718–741 (NACT…CDDK), 742–765 (KACT…CDDN), 766–789 (NPCT…VDDN), 790–813 (NPCT…VDDN), 814–837 (NKCT…TDDN), 838–861 (NACT…CDDN), 862–885 (NKCT…CDDS), 886–909 (NPCT…VDDN), 910–933 (NPCT…VDDN), 934–957 (NKCT…TDDN), 958–981 (NACT…TDDN), 982–1005 (NACT…CDDS), 1006–1029 (NPCT…VDDN), 1030–1053 (NPCT…VDDN), 1054–1077 (NKCT…TDDN), 1078–1101 (NACT…CDDS), 1102–1125 (NPCT…VDDN), 1126–1149 (NPCT…VDDN), 1150–1173 (NKCT…CDDN), 1174–1197 (NACT…CDDR), 1198–1221 (NPCT…TDDS), 1222–1245 (NKCT…CDDN), 1246–1269 (NACT…CDDK), 1270–1293 (NPCT…VDDN), 1294–1317 (DKCT…CDDN), 1318–1341 (NACT…CDDS), 1342–1365 (NPCT…VDDN), 1366–1389 (NPCT…VDDN), 1390–1413 (NKCT…CDDN), 1414–1437 (NPCT…VDDN), 1438–1461 (DACT…TDDN), 1462–1485 (NKCT…CDDG), 1486–1509 (NKCT…CPKP), 1511–1534 (DKCS…CTSD), 1558–1581 (NKCQ…CDDG), 1582–1606 (NACT…LPKN), 1608–1632 (NKCI…CECD), and 1658–1682 (NPKT…VITS). 2 N-linked (GlcNAc...) asparagine glycosylation sites follow: Asn-150 and Asn-151. 2 N-linked (GlcNAc...) asparagine glycosylation sites follow: Asn-270 and Asn-271. Asn-415 carries N-linked (GlcNAc...) asparagine glycosylation. Asn-535 carries an N-linked (GlcNAc...) asparagine glycan. A glycan (N-linked (GlcNAc...) asparagine) is linked at Asn-655. Residue Asn-751 is glycosylated (N-linked (GlcNAc...) asparagine). N-linked (GlcNAc...) asparagine glycosylation is found at Asn-871, Asn-894, and Asn-895. N-linked (GlcNAc...) asparagine glycosylation occurs at Asn-1015. Residues Asn-1110 and Asn-1111 are each glycosylated (N-linked (GlcNAc...) asparagine). Residue Asn-1183 is glycosylated (N-linked (GlcNAc...) asparagine). N-linked (GlcNAc...) asparagine glycosylation occurs at Asn-1255. Asn-1351 is a glycosylation site (N-linked (GlcNAc...) asparagine). Asn-1530 carries an N-linked (GlcNAc...) asparagine glycan. A glycan (N-linked (GlcNAc...) asparagine) is linked at Asn-1624.

It is found in the secreted. The polypeptide is Extracellular matrix protein A (ecmA) (Dictyostelium discoideum (Social amoeba)).